We begin with the raw amino-acid sequence, 237 residues long: Large ribosomal subunit protein uL1 (237 aa).

It belongs to the universal ribosomal protein uL1 family. In terms of assembly, part of the 50S ribosomal subunit.

Binds directly to 23S rRNA. The L1 stalk is quite mobile in the ribosome, and is involved in E site tRNA release. Its function is as follows. Protein L1 is also a translational repressor protein, it controls the translation of the L11 operon by binding to its mRNA. In Corynebacterium kroppenstedtii (strain DSM 44385 / JCM 11950 / CIP 105744 / CCUG 35717), this protein is Large ribosomal subunit protein uL1.